A 271-amino-acid polypeptide reads, in one-letter code: Large ribosomal subunit protein eL8 (271 aa).

This sequence belongs to the eukaryotic ribosomal protein eL8 family.

In Drosophila melanogaster (Fruit fly), this protein is Large ribosomal subunit protein eL8 (RpL7A).